The chain runs to 508 residues: MQTLPDLIPFDPNALLLGYQKRWVADTSQLKIAEKSRRTGLTWAEAADDVMIASLAKSEGGSDVFYIGSNKEMAREFIDACAMWAAQFNRAAGQIQEELFNDEDKDILTYVIYFASGFKIKALSSNPKNLRGMQGVVCIDEAAFHEKLAEVLKAALALTMWGAKVRLISTHNGVDNLFNQLIQDSRAGRKSYSVHTITLDDACAEGLYQRICQVSKQLWTPEKEAAWKAGLLRETATEDDALEEYYCVPKASSGAYIPRPMIERAATEGKAKLRFECDAKFMEWTEDERTVITSEFCLTQLLPHLQALNPDRRHAFGVDFARSADLSVYAVCAVQPDTARHFDLTLEIKNCPYNQQKQIMLFMLANLPRLIGAAFDATGNGGYLAEAALIRYGSSMVEAVQLNEKWYREWMPKYKALYESGYIQIPKDEEIILDHGHIQVINGVPKIDKSRSKDKSGKRHGDSAVAYCMAVRASYMTGGEIDFIPLPDKHSDRSENDEFDDFISNWDW.

This sequence to phage Mu protein gp28.

This chain is Mu-like prophage FluMu protein gp28, found in Haemophilus influenzae (strain ATCC 51907 / DSM 11121 / KW20 / Rd).